We begin with the raw amino-acid sequence, 520 residues long: MTTQTMTAVSGNDGDTGGDAAESPPGGPLLALDGITVTFPGVRALDAVSLSVRAGEVHGLMGENGAGKSTLLKVLSGVNQPQAGTLTLNGTEQRFASTRAALEAGIAIIYQELHLVPELTVAENLMLGQLPSRLGVVDERTLAARALDALERLGEHIDPGIPVKYLSIGQRQMIEIGKALMRDARVIAFDEPTSSLSARETTQLFRIIRALRAEGRAIIYVTHRMEEVYELCDRVTVFRDGRRIDTFDSVTDLDRDRLIGCMVGRSIEDVYGYRPRAAGDVLIEAKGLAGPGLSEPVSFTARRGEIVGFFGLVGAGRSELMKLLYGAARPSAGHVELNGKRVAFGSPRDAVRAGLALCPEDRKQEGIVAIASVADNLNISARRHFSPARVLLDGRRERELAQRYIERLAIKTRDGDTPIGALSGGNQQKVVLARWLAERIDVFLMDEPTRGIDVGARAEIYNLFYELAEAGRTVILVSSDLAEVIGVSDRIIVMKEGRIAGEVAKAHATPDALIKLALPR.

Over residues 1–10 (MTTQTMTAVS) the composition is skewed to polar residues. A disordered region spans residues 1–27 (MTTQTMTAVSGNDGDTGGDAAESPPGG). ABC transporter domains follow at residues 30-265 (LALD…MVGR) and 265-516 (RSIE…LIKL). 62–69 (GENGAGKS) is an ATP binding site.

This sequence belongs to the ABC transporter superfamily. Arabinose importer (TC 3.A.1.2.2) family. The complex is composed of two ATP-binding proteins (AraG), two transmembrane proteins (AraH) and a solute-binding protein (AraF).

It localises to the cell inner membrane. The enzyme catalyses L-arabinose(out) + ATP + H2O = L-arabinose(in) + ADP + phosphate + H(+). Its function is as follows. Part of the ABC transporter complex AraFGH involved in L-arabinose import. Responsible for energy coupling to the transport system. The protein is Arabinose import ATP-binding protein AraG of Azospirillum brasilense.